The chain runs to 1195 residues: ATP-dependent DNA helicase Hel308 (1195 aa).

Residues glutamine 20 and 39–46 contribute to the ATP site; that span reads IPTASGKT. Residues 26-196 form the Helicase ATP-binding domain; sequence RGLLDKNKNF…WLNAELIVDD (171 aa). A DEAH box motif is present at residues 143–146; that stretch reads DEIH. One can recognise a DOD-type homing endonuclease domain in the interval 451-584; that stretch reads FIGYFIGDGY…LQFVLLRFGI (134 aa).

The protein belongs to the helicase family. Hel308 subfamily. As to quaternary structure, monomer. In terms of processing, this protein undergoes a protein self splicing that involves a post-translational excision of the intervening region (intein) followed by peptide ligation.

The enzyme catalyses Couples ATP hydrolysis with the unwinding of duplex DNA by translocating in the 3'-5' direction.. It catalyses the reaction ATP + H2O = ADP + phosphate + H(+). DNA-dependent ATPase and 3'-5' DNA helicase that may be involved in repair of stalled replication forks. This is ATP-dependent DNA helicase Hel308 from Methanocaldococcus jannaschii (strain ATCC 43067 / DSM 2661 / JAL-1 / JCM 10045 / NBRC 100440) (Methanococcus jannaschii).